We begin with the raw amino-acid sequence, 379 residues long: Probable leucine aminopeptidase TRV_05286 (379 aa).

Positions 1-18 are cleaved as a signal peptide; that stretch reads MKIATLAVVSAFAATAIA. The Zn(2+) site is built by His-182 and Asp-201. Residues Asn-202 and Asn-226 are each glycosylated (N-linked (GlcNAc...) asparagine). Zn(2+) is bound by residues Glu-240 and Asp-267. The cysteines at positions 312 and 316 are disulfide-linked. His-345 is a binding site for Zn(2+).

It belongs to the peptidase M28 family. M28E subfamily. Monomer. Requires Zn(2+) as cofactor.

The protein localises to the secreted. In terms of biological role, probable extracellular aminopeptidase which contributes to pathogenicity. This chain is Probable leucine aminopeptidase TRV_05286, found in Trichophyton verrucosum (strain HKI 0517).